We begin with the raw amino-acid sequence, 203 residues long: A-type ATP synthase subunit E (203 aa).

This sequence belongs to the V-ATPase E subunit family. As to quaternary structure, has multiple subunits with at least A(3), B(3), C, D, E, F, H, I and proteolipid K(x).

It is found in the cell membrane. Its function is as follows. Component of the A-type ATP synthase that produces ATP from ADP in the presence of a proton gradient across the membrane. The sequence is that of A-type ATP synthase subunit E from Methanococcus aeolicus (strain ATCC BAA-1280 / DSM 17508 / OCM 812 / Nankai-3).